The chain runs to 476 residues: ATP synthase subunit beta, chloroplastic (476 aa).

Gly-155–Thr-162 lines the ATP pocket.

This sequence belongs to the ATPase alpha/beta chains family. As to quaternary structure, F-type ATPases have 2 components, CF(1) - the catalytic core - and CF(0) - the membrane proton channel. CF(1) has five subunits: alpha(3), beta(3), gamma(1), delta(1), epsilon(1). CF(0) has four main subunits: a(1), b(1), b'(1) and c(9-12).

It is found in the plastid. It localises to the chloroplast thylakoid membrane. It carries out the reaction ATP + H2O + 4 H(+)(in) = ADP + phosphate + 5 H(+)(out). Its function is as follows. Produces ATP from ADP in the presence of a proton gradient across the membrane. The catalytic sites are hosted primarily by the beta subunits. The protein is ATP synthase subunit beta, chloroplastic of Emiliania huxleyi (Coccolithophore).